The following is a 296-amino-acid chain: Protoheme IX farnesyltransferase (296 aa).

Topologically, residues M1–V9 are cytoplasmic. A helical membrane pass occupies residues T10–L28. Over A29–P37 the chain is Periplasmic. A helical transmembrane segment spans residues L38–F56. At N57–K78 the chain is on the cytoplasmic side. The helical transmembrane segment at G79–G97 threads the bilayer. Residues F98–P107 are Periplasmic-facing. A helical transmembrane segment spans residues L108–L126. At Y127–P197 the chain is on the cytoplasmic side. A helical transmembrane segment spans residues V198–F216. The Periplasmic portion of the chain corresponds to A217–Y228. A helical transmembrane segment spans residues A229–M247. At A248–S268 the chain is on the cytoplasmic side. Residues I269–N287 form a helical membrane-spanning segment. The Periplasmic portion of the chain corresponds to S288–W296.

Belongs to the UbiA prenyltransferase family. Protoheme IX farnesyltransferase subfamily.

The protein localises to the cell inner membrane. It catalyses the reaction heme b + (2E,6E)-farnesyl diphosphate + H2O = Fe(II)-heme o + diphosphate. Its pathway is porphyrin-containing compound metabolism; heme O biosynthesis; heme O from protoheme: step 1/1. Converts heme B (protoheme IX) to heme O by substitution of the vinyl group on carbon 2 of heme B porphyrin ring with a hydroxyethyl farnesyl side group. This is Protoheme IX farnesyltransferase from Salmonella arizonae (strain ATCC BAA-731 / CDC346-86 / RSK2980).